The following is a 447-amino-acid chain: Tektin-4 (447 aa).

Coiled coils occupy residues 69 to 144 (ADRD…ALDA) and 304 to 423 (FGRR…TNSL). Residues 72 to 81 (DQSERQRHES) show a composition bias toward basic and acidic residues. The segment at 72–104 (DQSERQRHESQQLAAETEALAQRTQQDSTRKVG) is disordered. The span at 82–97 (QQLAAETEALAQRTQQ) shows a compositional bias: low complexity.

This sequence belongs to the tektin family. In terms of assembly, microtubule inner protein component of sperm flagellar doublet microtubules. Post-translationally, ubiquitinated, leading to its degradation. Deubiquitinated by USP16, promoting its stability. As to expression, expressed in trachea multiciliated cells.

It localises to the cytoplasm. It is found in the cytoskeleton. The protein resides in the cilium axoneme. Its subcellular location is the flagellum axoneme. Functionally, microtubule inner protein (MIP) part of the dynein-decorated doublet microtubules (DMTs) in cilia and flagellar axoneme. Forms filamentous polymers in the walls of ciliary and flagellar microtubules. Contributes to normal sperm motility. The polypeptide is Tektin-4 (TEKT4) (Bos taurus (Bovine)).